The following is a 345-amino-acid chain: SLAM family member 5 (345 aa).

Residues 1–21 (MAQHHLWILLLCLQTWPEAAG) form the signal peptide. The Extracellular segment spans residues 22 to 225 (KDSEIFTVNG…AMGFRTHHTG (204 aa)). The Ig-like V-type domain maps to 26–129 (IFTVNGILGE…TTKRYNLQIY (104 aa)). The region spanning 135–207 (PKITQSLMAS…PVSNNSDSIS (73 aa)) is the Ig-like C2-type domain. The N-linked (GlcNAc...) asparagine glycan is linked to Asn-150. Cys-155 and Cys-193 are disulfide-bonded. Residues 226–246 (LLSVLAMFFLLVLILSSVFLF) traverse the membrane as a helical segment. At 247 to 345 (RLFKRRQGRI…PGTSSYEIVI (99 aa)) the chain is on the cytoplasmic side. The ITSM 1 signature appears at 277–282 (TIYTYI). Tyr-279 carries the phosphotyrosine modification. Tyr-296 bears the Phosphotyrosine; by LYN mark. Positions 314-319 (TVYSEV) match the ITSM 2 motif. The residue at position 316 (Tyr-316) is a Phosphotyrosine. The segment at 326–345 (GKASTQDSKPPGTSSYEIVI) is disordered. Residues 328–345 (ASTQDSKPPGTSSYEIVI) are compositionally biased toward polar residues. Tyr-341 bears the Phosphotyrosine; by FES mark.

In terms of assembly, homodimer; via its extracellular domain. Forms a head to tail dimer with a CD48 molecule from another cell. Interacts with SH2 domain-containing proteins SH2D1A/SAP and SH2D1B/EAT-2. Interacts with tyrosine-protein phosphatases PTPN6/SHP-1 and PTPN11//SHP-2 via its phosphorylated cytoplasmic domain, and this interaction is blocked by SH2D1A. Interacts (via phosphorylated ITSM 1 and 2) with INPP5D/SHIP1. Phosphorylated by tyrosine-protein kinase LCK on tyrosine residues following ligation induced by agonist monoclonal antibody. The association with SH2D1A is dependent of tyrosine phosphorylation of its cytoplasmic domain. Phosphorylated on Tyr-296 and Tyr-316 following platelet aggregation. Phosphorylated on tyrosine residues upon high affinity immunoglobulin epsilon receptor aggregation in mast cells. In terms of processing, N-glycosylated. Predominantly expressed in hematopoietic tissues, such as lymph node, spleen and peripheral leukocytes. Expressed in macrophages, B-cells, monocytes, platelets, thymocytes, T-cells and dendritic cells. Highly expressed in memory T-cells. Expressed in mast cells.

The protein localises to the cell membrane. Functionally, self-ligand receptor of the signaling lymphocytic activation molecule (SLAM) family. SLAM receptors triggered by homo- or heterotypic cell-cell interactions are modulating the activation and differentiation of a wide variety of immune cells and thus are involved in the regulation and interconnection of both innate and adaptive immune response. Activities are controlled by presence or absence of small cytoplasmic adapter proteins, SH2D1A/SAP and/or SH2D1B/EAT-2. Can mediate natural killer (NK) cell cytotoxicity dependent on SH2D1A and SH2D1B. Increases proliferative responses of activated T-cells and SH2D1A/SAP does not seem be required for this process. Homophilic interactions enhance interferon gamma/IFNG secretion in lymphocytes and induce platelet stimulation via a SH2D1A-dependent pathway. May serve as a marker for hematopoietic progenitor cells Required for a prolonged T-cell:B-cell contact, optimal T follicular helper function, and germinal center formation. In germinal centers involved in maintaining B-cell tolerance and in preventing autoimmunity. In mast cells negatively regulates high affinity immunoglobulin epsilon receptor signaling; independent of SH2D1A and SH2D1B but implicating FES and PTPN6/SHP-1. In macrophages enhances LPS-induced MAPK phosphorylation and NF-kappaB activation and modulates LPS-induced cytokine secretion; involving ITSM 2. Positively regulates macroautophagy in primary dendritic cells via stabilization of IRF8; inhibits TRIM21-mediated proteasomal degradation of IRF8. This chain is SLAM family member 5 (CD84), found in Homo sapiens (Human).